The following is a 493-amino-acid chain: Transcript termination protein A18 (493 aa).

In terms of domain architecture, Helicase ATP-binding spans 100–256; the sequence is MIELKRPLYI…NSIINIAKLS (157 aa). Residue 113–120 participates in ATP binding; that stretch reads LACGFGKT. The DESH box signature appears at 206-209; that stretch reads DESH. Residues 309-456 form the Helicase C-terminal domain; the sequence is ILDTLVEEFK…IISLSVDKLG (148 aa).

The protein belongs to the helicase family. Poxviruses subfamily. As to quaternary structure, interacts with G2. Might be part of a transcription complex composed at least of G2, A18, and H5.

Its subcellular location is the virion. In terms of biological role, DNA helicase which seems to act as a postreplicative transcription termination factor. Involved in ATP-dependent release of nascent RNA. Forms a stable complex with single-stranded DNA, and to a lesser extent RNA. The sequence is that of Transcript termination protein A18 from Mus musculus (Mouse).